Here is a 267-residue protein sequence, read N- to C-terminus: Acyl-[acyl-carrier-protein]--UDP-N-acetylglucosamine O-acyltransferase (267 aa).

The protein belongs to the transferase hexapeptide repeat family. LpxA subfamily. Homotrimer.

The protein resides in the cytoplasm. It catalyses the reaction a (3R)-hydroxyacyl-[ACP] + UDP-N-acetyl-alpha-D-glucosamine = a UDP-3-O-[(3R)-3-hydroxyacyl]-N-acetyl-alpha-D-glucosamine + holo-[ACP]. Its pathway is glycolipid biosynthesis; lipid IV(A) biosynthesis; lipid IV(A) from (3R)-3-hydroxytetradecanoyl-[acyl-carrier-protein] and UDP-N-acetyl-alpha-D-glucosamine: step 1/6. In terms of biological role, involved in the biosynthesis of lipid A, a phosphorylated glycolipid that anchors the lipopolysaccharide to the outer membrane of the cell. This Cupriavidus metallidurans (strain ATCC 43123 / DSM 2839 / NBRC 102507 / CH34) (Ralstonia metallidurans) protein is Acyl-[acyl-carrier-protein]--UDP-N-acetylglucosamine O-acyltransferase.